The following is a 611-amino-acid chain: Podocan (611 aa).

A signal peptide spans 1–23 (MAGSRGLPLLLLVLQLFLGPVLP). The LRRNT domain occupies 60–97 (PEPGPATVDCPRDCACSQEGVVDCGGIDLREFPGDLPE). LRR repeat units follow at residues 98-119 (HTNH…ELSR), 122-145 (RLET…AFEH), 148-169 (SLNY…LPNA), 170-190 (LISV…TFGQ), and 193-213 (NLRS…PDHM). Asn215 carries an N-linked (GlcNAc...) asparagine glycan. 15 LRR repeats span residues 219–239 (NVEI…HLPP), 240–261 (ALYK…AFSE), 264–284 (NLRE…DNET), 290–311 (SLEY…LPRS), 312–332 (LVLL…VLTP), 335–358 (NLEY…AFQG), 361–382 (KLHT…LPRR), 383–403 (VRTL…DFAT), 406–427 (FLEE…RDAF), 432–453 (LLRS…LPKN), 477–490 (QLRE…RLRS), 503–523 (GLQL…GLPP), 524–545 (SLEY…AFDS), 548–569 (NLKG…ESAF), and 574–583 (HLQVLDIEGN). An N-linked (GlcNAc...) asparagine glycan is attached at Asn282. Asn411 carries an N-linked (GlcNAc...) asparagine glycan. Residues 585–611 (EFGNGSKDKDEEEEEEEEEEDEEEETR) form a disordered region. Over residues 594–611 (DEEEEEEEEEEDEEEETR) the composition is skewed to acidic residues.

It belongs to the small leucine-rich proteoglycan (SLRP) family. SLRP class V subfamily. In terms of assembly, binds to type I collagen. N-glycosylated. In terms of tissue distribution, kidney. Expressed in podocytes and likely vascular endothelial cells within the glomerulus.

The protein localises to the secreted. Its subcellular location is the extracellular space. It localises to the extracellular matrix. Negatively regulates cell proliferation and cell migration, especially in smooth muscle cells. The sequence is that of Podocan (Podn) from Mus musculus (Mouse).